We begin with the raw amino-acid sequence, 230 residues long: UPF0173 metal-dependent hydrolase OEOE_1287 (230 aa).

Belongs to the UPF0173 family.

The chain is UPF0173 metal-dependent hydrolase OEOE_1287 from Oenococcus oeni (strain ATCC BAA-331 / PSU-1).